The sequence spans 1237 residues: Anion exchange protein 2 (1237 aa).

The segment at 1 to 237 (MSSAPRRPAS…SYNLQERRRI (237 aa)) is disordered. The Cytoplasmic portion of the chain corresponds to 1 to 704 (MSSAPRRPAS…DFRDALDPQC (704 aa)). Basic and acidic residues-rich tracts occupy residues 37–49 (ELHRTLGVERFEE) and 58–75 (GGEEPGRSYGEEDFEYHR). Composition is skewed to basic residues over residues 76–85 (QSSHHIHHPL) and 94–110 (RRRKTPQGPGRKSRRRP). S113, S132, S144, S170, and S172 each carry phosphoserine. Residues 120 to 133 (TIEEGEEDEDEASE) are compositionally biased toward acidic residues. Over residues 137–151 (ARAPTQPSPASTPSS) the composition is skewed to low complexity. A compositionally biased stretch (gly residues) spans 205–215 (GTAGGDDGGAS). The residue at position 239 (S239) is a Phosphoserine. At T253 the chain carries Phosphothreonine. At K270 the chain carries N6-methyllysine. The disordered stretch occupies residues 286 to 316 (RKNAKGSVQSGREGREPGPTPRARPRAPHKP). S439 is modified (phosphoserine). A disordered region spans residues 445–466 (SLLGHHHGQGAESDPHVTEPLI). The membrane (anion exchange) stretch occupies residues 704-1237 (CLAAVIFIYF…DEYNEMPMPV (534 aa)). 4 helical membrane-spanning segments follow: residues 705-725 (LAAVIFIYFAALSPAITFGGL), 750-770 (FCLLGAQPLLVIGFSGPLLVF), 792-812 (IGFWLVLLALLMVALEGSFLV), and 822-842 (IFAFLISLIFIYETFYKLVKI). Topologically, residues 843–893 (FQEHPLHGCSVSNSSEADSGDNATWAGTRVTLGLGNGSSAGPAGQGRPRGQ) are extracellular. 3 N-linked (GlcNAc...) asparagine glycosylation sites follow: N855, N864, and N878. The helical transmembrane segment at 894 to 914 (PNTALLSLVLMAGTFFIAFFL) threads the bilayer. Residues 915–929 (RKFKNGRFFPGRVRR) are Cytoplasmic-facing. 5 consecutive transmembrane segments (helical) span residues 930-950 (VIGDFGVPIAILIMVLVDYSI), 985-1005 (FPVWMMVASLLPAILVFILIF), 1032-1052 (LLLIVAMGGICALFGLPWLAA), 1086-1106 (RVTGLLVALLVGLSIVIGDLL), and 1109-1129 (IPLAVLFGIFLYMGVTSLNGI). A lipid anchor (S-palmitoyl cysteine) is attached at C1169. The helical transmembrane segment at 1170-1190 (LALLWAVMSTAASLAFPFILI) threads the bilayer.

The protein belongs to the anion exchanger (TC 2.A.31) family.

The protein localises to the apical cell membrane. The protein resides in the basolateral cell membrane. It catalyses the reaction hydrogencarbonate(in) + chloride(out) = hydrogencarbonate(out) + chloride(in). Functionally, sodium-independent anion exchanger which mediates the electroneutral exchange of chloride for bicarbonate ions across the cell membrane. Plays an important role in osteoclast differentiation and function. Regulates bone resorption and calpain-dependent actin cytoskeleton organization in osteoclasts via anion exchange-dependent control of pH. Essential for intracellular pH regulation in CD8(+) T-cells upon CD3 stimulation, modulating CD8(+) T-cell response. This is Anion exchange protein 2 (SLC4A2) from Equus caballus (Horse).